Here is a 117-residue protein sequence, read N- to C-terminus: NADH-ubiquinone oxidoreductase chain 3 (117 aa).

Helical transmembrane passes span 1–21, 57–77, and 86–106; these read MLML…VMML, FFLI…LLPM, and LMNW…GLYH.

Belongs to the complex I subunit 3 family.

The protein resides in the mitochondrion membrane. The catalysed reaction is a ubiquinone + NADH + 5 H(+)(in) = a ubiquinol + NAD(+) + 4 H(+)(out). Its function is as follows. Core subunit of the mitochondrial membrane respiratory chain NADH dehydrogenase (Complex I) that is believed to belong to the minimal assembly required for catalysis. Complex I functions in the transfer of electrons from NADH to the respiratory chain. The immediate electron acceptor for the enzyme is believed to be ubiquinone. The protein is NADH-ubiquinone oxidoreductase chain 3 (ND3) of Anopheles quadrimaculatus (Common malaria mosquito).